The following is a 201-amino-acid chain: Elongation factor Ts (201 aa).

The tract at residues 83–86 (TDFV) is involved in Mg(2+) ion dislocation from EF-Tu.

This sequence belongs to the EF-Ts family.

It is found in the cytoplasm. Associates with the EF-Tu.GDP complex and induces the exchange of GDP to GTP. It remains bound to the aminoacyl-tRNA.EF-Tu.GTP complex up to the GTP hydrolysis stage on the ribosome. In Methylacidiphilum infernorum (isolate V4) (Methylokorus infernorum (strain V4)), this protein is Elongation factor Ts.